Here is a 463-residue protein sequence, read N- to C-terminus: ATP-dependent protease ATPase subunit HslU (463 aa).

ATP contacts are provided by residues I19, 61-66, D277, E341, and R413; that span reads GVGKTE.

It belongs to the ClpX chaperone family. HslU subfamily. As to quaternary structure, a double ring-shaped homohexamer of HslV is capped on each side by a ring-shaped HslU homohexamer. The assembly of the HslU/HslV complex is dependent on binding of ATP.

The protein resides in the cytoplasm. ATPase subunit of a proteasome-like degradation complex; this subunit has chaperone activity. The binding of ATP and its subsequent hydrolysis by HslU are essential for unfolding of protein substrates subsequently hydrolyzed by HslV. HslU recognizes the N-terminal part of its protein substrates and unfolds these before they are guided to HslV for hydrolysis. This is ATP-dependent protease ATPase subunit HslU from Bacillus cereus (strain ATCC 14579 / DSM 31 / CCUG 7414 / JCM 2152 / NBRC 15305 / NCIMB 9373 / NCTC 2599 / NRRL B-3711).